The primary structure comprises 377 residues: Endolytic peptidoglycan transglycosylase RlpA (377 aa).

The signal sequence occupies residues 1-19 (MHKQLPVICVAAGIVLLAA). The N-palmitoyl cysteine moiety is linked to residue Cys20. Residue Cys20 is the site of S-diacylglycerol cysteine attachment. The segment at 196–277 (LPPRPDLSGG…PVSAPVTAPA (82 aa)) is disordered. Composition is skewed to low complexity over residues 208–218 (SASSAPAQPQG) and 264–277 (PQTA…TAPA). The region spanning 300 to 376 (AAASGRFVVQ…AQLQSFIASA (77 aa)) is the SPOR domain.

Belongs to the RlpA family.

The protein localises to the cell membrane. In terms of biological role, lytic transglycosylase with a strong preference for naked glycan strands that lack stem peptides. In Salmonella typhi, this protein is Endolytic peptidoglycan transglycosylase RlpA.